A 382-amino-acid polypeptide reads, in one-letter code: Protein MGF 360-4L (382 aa).

This sequence belongs to the asfivirus MGF 360 family.

Functionally, plays a role in virus cell tropism, and may be required for efficient virus replication in macrophages. The sequence is that of Protein MGF 360-4L from Ornithodoros (relapsing fever ticks).